Consider the following 560-residue polypeptide: NRAMP-like transporter smf-3 (560 aa).

Residues 1 to 43 are Cytoplasmic-facing; that stretch reads MEGEMKCPIEEIREKPEMRKAQQTYEVQVEVEDTPDTTFSWRK. A helical membrane pass occupies residues 44–64; that stretch reads LWAFTGPGFLMSIAYLDPGNI. The Extracellular segment spans residues 65–71; the sequence is ESDLQAG. The helical transmembrane segment at 72–92 threads the bilayer; that stretch reads AISYFKLIWVLLVAHIMGLLL. The Cytoplasmic portion of the chain corresponds to 93–120; the sequence is QRLAARLGVVSGKHMAEIAFSYYPKIPR. A helical transmembrane segment spans residues 121–141; it reads LVLWMLVESAIVGSDMQEVIG. Residues 142–152 are Extracellular-facing; the sequence is TAISFYLLSNG. A helical transmembrane segment spans residues 153–173; sequence VIPLWAGVLITICDTFTFLFL. At 174–182 the chain is on the cytoplasmic side; sequence EKYGVRKFE. Residues 183–203 traverse the membrane as a helical segment; it reads AFFCFLITCMAITFGYEFGVS. Residues 204–229 lie on the Extracellular side of the membrane; sequence APDAGKMFSGMFVPWCNGCDNNMVMQ. A helical transmembrane segment spans residues 230–250; that stretch reads GVAIIGAVIMPHNFYLHSALV. The Cytoplasmic segment spans residues 251–268; the sequence is KSRRVDRRRAEKVTEANK. A helical membrane pass occupies residues 269 to 289; that stretch reads YFFIESAFALFVSFIINTLVI. Over 290–339 the chain is Extracellular; sequence SVFAQGMYGKTNQDIRDTCYNNTHNGMPDFYKVEFPANNDAAQSDIYHAG. N310 is a glycosylation site (N-linked (GlcNAc...) asparagine). Residues 340–360 form a helical membrane-spanning segment; the sequence is IFLGCTFGIFALYVWAVGILA. Topologically, residues 361 to 390 are cytoplasmic; it reads AGQSSTMTGTYAGQFAMEGFIQIKLPQWKR. A helical membrane pass occupies residues 391 to 411; that stretch reads ILITRSLAILPTLAVVIFSGG. The Extracellular segment spans residues 412–420; that stretch reads IDNISSLND. The N-linked (GlcNAc...) asparagine glycan is linked to N414. A helical membrane pass occupies residues 421-441; that stretch reads FLNCLQLIQLPFALIPVLTFV. Over 442 to 458 the chain is Cytoplasmic; sequence SDRNIMHEYKLASVSKV. The helical transmembrane segment at 459–479 threads the bilayer; sequence VSIVISLIILFINFYFLYSWI. The Extracellular portion of the chain corresponds to 480–486; it reads GSTFGYN. A helical transmembrane segment spans residues 487–507; sequence AVSIPITIFCAIFYIIFIAYL. The Cytoplasmic segment spans residues 508-560; it reads TYYCLVAMEFISPIQTKWLAEPIYHDFDAPWLEDSENPSTKNTISDDELSMRY.

It belongs to the NRAMP family. In terms of tissue distribution, expressed in dopaminergic neurons (at protein level). Expressed in intestine with a weaker expression in the most proximal and distal regions. Weakly expressed in the hyp1-6, hyp7 and hyp8-12 hypodermis and in head and tail neurons.

The protein localises to the apical cell membrane. It localises to the cytoplasmic vesicle membrane. Its function is as follows. Probable divalent metal ion transporter which regulates the uptake of several heavy metals such as Mn(2+), Al(3+) and iron. Plays a role in modulating Al(3+)-induced dopamine (DA) neuron degeneration through the intracellular sequestration of Al(3+). This chain is NRAMP-like transporter smf-3, found in Caenorhabditis elegans.